The chain runs to 189 residues: Probable nicotinate-nucleotide adenylyltransferase (189 aa).

Belongs to the NadD family.

It catalyses the reaction nicotinate beta-D-ribonucleotide + ATP + H(+) = deamido-NAD(+) + diphosphate. It participates in cofactor biosynthesis; NAD(+) biosynthesis; deamido-NAD(+) from nicotinate D-ribonucleotide: step 1/1. Catalyzes the reversible adenylation of nicotinate mononucleotide (NaMN) to nicotinic acid adenine dinucleotide (NaAD). The chain is Probable nicotinate-nucleotide adenylyltransferase from Exiguobacterium sibiricum (strain DSM 17290 / CCUG 55495 / CIP 109462 / JCM 13490 / 255-15).